We begin with the raw amino-acid sequence, 638 residues long: Growth hormone receptor (638 aa).

A signal peptide spans 1–18 (MDLWRVFLTLALAVSSDM). Topologically, residues 19–265 (FPGSGATPAT…TLAACEEDFR (247 aa)) are extracellular. 2 disulfide bridges follow: Cys56/Cys66 and Cys101/Cys112. Asn115 carries an N-linked (GlcNAc...) asparagine glycan. A disulfide bridge links Cys126 with Cys140. The region spanning 151-254 (PPIGLNWTLL…EVLRVTFPQM (104 aa)) is the Fibronectin type-III domain. Asn156, Asn161, and Asn200 each carry an N-linked (GlcNAc...) asparagine glycan. The WSXWS motif signature appears at 240-244 (YSEFS). A helical transmembrane segment spans residues 266–289 (FPWFLIIIFGIFGVAVMLFVVIFS). Topologically, residues 290-638 (KQQRIKMLIL…STDQLNKIMQ (349 aa)) are cytoplasmic. Residues 295 to 380 (KMLILPPVPV…QEKSAGILGA (86 aa)) are required for JAK2 binding. The Box 1 motif signature appears at 298 to 306 (ILPPVPVPK). Positions 341–350 (DSWVEFIELD) match the UbE motif motif. Ser342 is subject to Phosphoserine. A disordered region spans residues 357-389 (KTEESDTDRLLSDDQEKSAGILGAKDDDSGRTS). The segment covering 363-373 (TDRLLSDDQEK) has biased composition (basic and acidic residues). 2 positions are modified to phosphotyrosine: Tyr487 and Tyr594.

Belongs to the type I cytokine receptor family. Type 1 subfamily. As to quaternary structure, on growth hormone (GH) binding, forms homodimers and binds JAK2 via a box 1-containing domain. The soluble form (GHBP) is produced by phorbol ester-promoted proteolytic cleavage at the cell surface (shedding) by ADAM17/TACE. Shedding is inhibited by growth hormone (GH) binding to the receptor probably due to a conformational change in GHR rendering the receptor inaccessible to ADAM17. Post-translationally, on GH binding, phosphorylated on tyrosine residues in the cytoplasmic domain by JAK2. Phosphorylation on either (or all of) Tyr-534, Tyr-566 and/or Tyr-627 is required for STAT5 activation. Phosphorylation on Tyr-333 would seem necessary for JAK2 activation. In terms of processing, ubiquitinated by the ECS(SOCS2) complex following ligand-binding and phosphorylation by JAK2, leading to its degradation by the proteasome. Regulation by the ECS(SOCS2) complex acts as a negative feedback loop of growth hormone receptor signaling. Ubiquitination is not sufficient for GHR internalization. Highest expression in liver. Also expressed in heart, kidney and muscle.

It localises to the cell membrane. Its subcellular location is the secreted. In terms of biological role, receptor for pituitary gland growth hormone involved in regulating postnatal body growth. On ligand binding, couples to, and activates the JAK2/STAT5 pathway. Receptor for pituitary gland growth hormone (GH1) involved in regulating postnatal body growth. On ligand binding, couples to the JAK2/STAT5 pathway. Functionally, the soluble form (GHBP) acts as a reservoir of growth hormone in plasma and may be a modulator/inhibitor of GH signaling. The sequence is that of Growth hormone receptor (Ghr) from Rattus norvegicus (Rat).